A 319-amino-acid polypeptide reads, in one-letter code: Urease accessory protein UreD (319 aa).

Residues 298–319 (QEQPLPPSSFKTNTAVPAVRTH) form a disordered region.

This sequence belongs to the UreD family. In terms of assembly, ureD, UreF and UreG form a complex that acts as a GTP-hydrolysis-dependent molecular chaperone, activating the urease apoprotein by helping to assemble the nickel containing metallocenter of UreC. The UreE protein probably delivers the nickel.

It is found in the cytoplasm. In terms of biological role, required for maturation of urease via the functional incorporation of the urease nickel metallocenter. This chain is Urease accessory protein UreD, found in Synechococcus sp. (strain WH7805).